We begin with the raw amino-acid sequence, 599 residues long: Putative fused cobalt transport protein CbiMQ (599 aa).

The segment at 1–239 (MHIMEGFLPS…LLPSSDQNLS (239 aa)) is cbiM. Helical transmembrane passes span 12–32 (WWQF…AALI), 44–64 (LLGL…PSVG), 74–94 (FGAI…VLVF), 106–126 (TLGA…CIIF), 140–160 (SFSV…YMMT), 162–182 (LQLA…FVVY), 183–203 (LGIF…LIVL), 247–267 (IIAG…LAGL), 303–323 (WLFA…LYLL), 356–376 (QVSA…GVTS), 377–397 (PLPY…LIIA), 407–427 (LLTI…LITG), 438–458 (IGAF…LVLS), 463–483 (GMCS…FSVL), 493–513 (IDLS…AIAI), and 579–599 (MAVF…MLLL). A cbiQ region spans residues 341–599 (DEHILDDVAI…GLLCAEMLLL (259 aa)).

This sequence in the N-terminal section; belongs to the CbiM family. The protein in the C-terminal section; belongs to the CbiQ family. In terms of assembly, forms an energy-coupling factor (ECF) transporter complex composed of an ATP-binding protein (A component, CbiO), a transmembrane protein (T component, CbiQ) and 2 possible substrate-capture proteins (S components, CbiM and CbiN) of unknown stoichimetry.

It is found in the cell membrane. It functions in the pathway cofactor biosynthesis; adenosylcobalamin biosynthesis. Part of the energy-coupling factor (ECF) transporter complex CbiMNOQ involved in cobalt import. This chain is Putative fused cobalt transport protein CbiMQ (cbiMQ), found in Methanocorpusculum labreanum (strain ATCC 43576 / DSM 4855 / Z).